The chain runs to 212 residues: Actin-depolymerizing factor 1, isoforms a/b (212 aa).

In terms of domain architecture, ADF-H spans 3 to 159; that stretch reads SGVMVDPDVQ…SHKELLNNCP (157 aa).

It belongs to the actin-binding proteins ADF family. In terms of assembly, interacts with F-actin.

Depolymerizes growing actin filaments in muscle cells; required for the assembly of actin filaments into the functional contractile myofilament lattice of muscle. Competes with unc-87 for actin binding and inhibits the actin-bundling activity of unc-87. This chain is Actin-depolymerizing factor 1, isoforms a/b, found in Caenorhabditis elegans.